The primary structure comprises 1134 residues: Error-prone DNA polymerase (1134 aa).

The segment at 1–33 is disordered; that stretch reads MSYHNPPIPWRELEGRISGRPAPHGHQESHADQ.

It belongs to the DNA polymerase type-C family. DnaE2 subfamily.

The protein resides in the cytoplasm. It catalyses the reaction DNA(n) + a 2'-deoxyribonucleoside 5'-triphosphate = DNA(n+1) + diphosphate. Functionally, DNA polymerase involved in damage-induced mutagenesis and translesion synthesis (TLS). It is not the major replicative DNA polymerase. The sequence is that of Error-prone DNA polymerase from Cutibacterium acnes (strain DSM 16379 / KPA171202) (Propionibacterium acnes).